The sequence spans 150 residues: Geranyl diphosphate phosphohydrolase (150 aa).

In terms of domain architecture, Nudix hydrolase spans 14–147 (SIKVAVVVCL…DNVVQDGFNP (134 aa)). The Nudix box signature appears at 48–69 (GHLEFGESFEECAARELKEETD). 2 residues coordinate Mg(2+): Glu63 and Glu67.

Belongs to the Nudix hydrolase family. As to expression, expressed in petals. Little or no expression in stamens, sepals or young leaves.

It is found in the cytoplasm. The catalysed reaction is (2E)-geranyl diphosphate + H2O = (2E)-geranyl phosphate + phosphate + H(+). Involved in a cytosolic pathway for the biosynthesis of free monoterpene alcohols that contribute to fragrance. Lacks terpene synthase activity, but has a diphosphohydrolase activity with geranyl diphosphate and farnesyl diphosphate as substrates. No activity with 8-oxo-dGTP and dGTP and unable to dephosphorylate geranyl phosphate to geraniol. This is Geranyl diphosphate phosphohydrolase from Rosa hybrid cultivar.